Consider the following 336-residue polypeptide: Probable carboxylesterase 6 (336 aa).

Residues 1–20 (MGGTKLTHVTTTNPNNSNIH) form a disordered region. The segment covering 7–19 (THVTTTNPNNSNI) has biased composition (polar residues). The Involved in the stabilization of the negatively charged intermediate by the formation of the oxyanion hole signature appears at 96–98 (HGG). Active-site residues include Ser176, Asp276, and His303.

It belongs to the 'GDXG' lipolytic enzyme family. Expressed in roots, leaves, flowers and siliques.

It catalyses the reaction a carboxylic ester + H2O = an alcohol + a carboxylate + H(+). Functionally, carboxylesterase acting on esters with varying acyl chain length. In Arabidopsis thaliana (Mouse-ear cress), this protein is Probable carboxylesterase 6 (CXE6).